The sequence spans 200 residues: MLKYPDYLSKLISFLRKLPGIGFKTAEKLAFELLDWEQDQLEALGKAFSELSIARSHCPCCFCLKNFPESQCEFCQNNRDTSTLCIVASPKDIFSLERSQVFKGHYYVLGTLLSPLTGKHIEEERMRLLKQRIEFLNPKEIILALDATLEGDATALFLKQELAYSLASISRLALGLPIGLSFDYIDSGTLARAFSGRNPY.

The C4-type zinc finger occupies Cys58–Cys75. The 96-residue stretch at Ser82 to Pro177 folds into the Toprim domain.

This sequence belongs to the RecR family.

May play a role in DNA repair. It seems to be involved in an RecBC-independent recombinational process of DNA repair. It may act with RecF and RecO. The chain is Recombination protein RecR from Chlamydia felis (strain Fe/C-56) (Chlamydophila felis).